A 265-amino-acid chain; its full sequence is MAAESAPVGVFDSGVGGLSVLREIRARLPAESLLYVADNAHVPYGEKSAEYIRERCERIGDFLLERGAKALVLACNTATAAAAAELRERYPQVPLVAMEPAVKPAAAATRNGRVGVLATTGTLKSARFAALLDRFASDVQVFTQPCPGLVERIEAGDLHGARTRALLERLLGPILEQGCDTLILGCTHYPFVKPLLAELIPADIAVIDTGAAVARQLERVLSTRALLASGQAAAPRFWTSALPEEMERILPILWGSQESVGKLDV.

Residues 12 to 13 (DS) and 44 to 45 (YG) each bind substrate. The active-site Proton donor/acceptor is the C75. 76–77 (NT) contributes to the substrate binding site. C186 serves as the catalytic Proton donor/acceptor. 187–188 (TH) contacts substrate.

The protein belongs to the aspartate/glutamate racemases family.

It carries out the reaction L-glutamate = D-glutamate. It functions in the pathway cell wall biogenesis; peptidoglycan biosynthesis. In terms of biological role, provides the (R)-glutamate required for cell wall biosynthesis. The polypeptide is Glutamate racemase (Pseudomonas paraeruginosa (strain DSM 24068 / PA7) (Pseudomonas aeruginosa (strain PA7))).